The sequence spans 65 residues: Small, acid-soluble spore protein 2 (65 aa).

This sequence belongs to the alpha/beta-type SASP family.

SASP are bound to spore DNA. They are double-stranded DNA-binding proteins that cause DNA to change to an a-like conformation. They protect the DNA backbone from chemical and enzymatic cleavage and are thus involved in dormant spore's high resistance to UV light. This is Small, acid-soluble spore protein 2 (sasP-2) from Bacillus cereus.